Here is a 177-residue protein sequence, read N- to C-terminus: Large ribosomal subunit protein bL17 (177 aa).

Residues Ala136–Glu177 are disordered. Over residues Glu138–Glu149 the composition is skewed to acidic residues. Positions Ala150–Glu164 are enriched in low complexity.

It belongs to the bacterial ribosomal protein bL17 family. As to quaternary structure, part of the 50S ribosomal subunit. Contacts protein L32.

The protein is Large ribosomal subunit protein bL17 of Bifidobacterium longum (strain NCC 2705).